The chain runs to 1185 residues: DNA-directed RNA polymerase subunit beta' (1185 aa).

Zn(2+) contacts are provided by Cys-67, Cys-69, Cys-82, and Cys-85. The Mg(2+) site is built by Asp-457, Asp-459, and Asp-461. Positions 802, 876, 883, and 886 each coordinate Zn(2+).

Belongs to the RNA polymerase beta' chain family. As to quaternary structure, the RNAP catalytic core consists of 2 alpha, 1 beta, 1 beta' and 1 omega subunit. When a sigma factor is associated with the core the holoenzyme is formed, which can initiate transcription. The cofactor is Mg(2+). Requires Zn(2+) as cofactor.

The catalysed reaction is RNA(n) + a ribonucleoside 5'-triphosphate = RNA(n+1) + diphosphate. Functionally, DNA-dependent RNA polymerase catalyzes the transcription of DNA into RNA using the four ribonucleoside triphosphates as substrates. In Clostridium novyi (strain NT), this protein is DNA-directed RNA polymerase subunit beta'.